The following is a 790-amino-acid chain: Disintegrin and metalloproteinase domain-containing protein 30 (790 aa).

An N-terminal signal peptide occupies residues 1–27; it reads MRSVQIFLSQCRLLLLLVPTMLLKSLG. A propeptide spanning residues 28-198 is cleaved from the precursor; the sequence is EDVIFHPEGE…KARLRDFPGS (171 aa). Positions 170 to 177 match the Cysteine switch motif; sequence QVCGLSDD. Cys172 serves as a coordination point for Zn(2+). At 199-687 the chain is on the extracellular side; sequence YKHPKYLELI…LRGAIPSSIW (489 aa). The Peptidase M12B domain maps to 203–393; it reads KYLELILLFD…SGATCLNNIP (191 aa). The N-linked (GlcNAc...) asparagine glycan is linked to Asn222. 3 disulfide bridges follow: Cys313-Cys388, Cys353-Cys373, and Cys355-Cys361. A Zn(2+)-binding site is contributed by His338. Glu339 is a catalytic residue. His342 and His348 together coordinate Zn(2+). Residues Asn372, Asn438, Asn473, and Asn625 are each glycosylated (N-linked (GlcNAc...) asparagine). One can recognise a Disintegrin domain in the interval 399 to 485; that stretch reads LKRCGNKIVE…SCPNDVYKQD (87 aa). Cysteines 457 and 477 form a disulfide. Positions 629–663 constitute an EGF-like domain; that stretch reads LQFDCLPEKCNTRGVCNNRKNCHCMYGWAPPFCEE. 3 cysteine pairs are disulfide-bonded: Cys633–Cys644, Cys638–Cys650, and Cys652–Cys661. Residues 688 to 708 form a helical membrane-spanning segment; the sequence is VVSIIMFRLILLILSVVFVFF. At 709 to 790 the chain is on the cytoplasmic side; that stretch reads RQVIGNHLKP…KAKSVKKQKK (82 aa). Over residues 720–779 the composition is skewed to basic and acidic residues; the sequence is QEKMPLSKAKTEQEESKTKTVQEESKTKTGQEESEAKTGQEESKAKTGQEESKANIESKR. The tract at residues 720 to 790 is disordered; it reads QEKMPLSKAK…KAKSVKKQKK (71 aa). A run of 5 repeats spans residues 732–740, 741–749, 750–758, 759–767, and 768–776. The tract at residues 732 to 776 is 5 X 9 AA approximate repeats; sequence QEESKTKTVQEESKTKTGQEESEAKTGQEESKAKTGQEESKANIE. Over residues 780–790 the composition is skewed to basic residues; that stretch reads PKAKSVKKQKK.

Interacts with CTSD; this leads to activation of CTSD. The cofactor is Zn(2+). Expressed in brain neurons (at protein level). Expressed in testis.

Its subcellular location is the late endosome membrane. Its function is as follows. Plays a role in lysosomal amyloid precursor protein (APP) processing by cleaving and activating CTSD/cathepsin D which leads to APP degradation. In Homo sapiens (Human), this protein is Disintegrin and metalloproteinase domain-containing protein 30 (ADAM30).